Here is a 607-residue protein sequence, read N- to C-terminus: Autophagy-related protein 16-1 (607 aa).

The segment at 13–43 (WKRHISEQLRRRDRLQRQAFEEIILQYNKLL) is interaction with ATG5. The stretch at 78–230 (NDNQLQEMAQ…QKELAEAAKE (153 aa)) forms a coiled coil. At Ser-139 the chain carries Phosphoserine; by CK2. The segment at 207–230 (AENEKDSRRRQARLQKELAEAAKE) is WIPI2-binding. The interval 230–242 (EPLPVEQDDDIEV) is RB1CC1-binding. Phosphoserine is present on residues Ser-269 and Ser-287. Residues 296–299 (DNVD) carry the Caspase cleavage motif. 7 WD repeats span residues 320-359 (AHDGEVNAVQFSPGSRLLATGGMDRRVKLWEVFGEKCEFK), 364-403 (GSNAGITSIEFDSAGSYLLAASNDFASRIWTVDDYRLRHT), 406-445 (GHSGKVLSAKFLLDNARIVSGSHDRTLKLWDLRSKVCIKT), 447-484 (FAGSSCNDIVCTEQCVMSGHFDKKIRFWDIRSESIVRE), 486-525 (ELLGKITALDLNPERTELLSCSRDDLLKVIDLRTNAIKQT), 532-573 (KCGS…KVLS), and 575-607 (QHSSSINAVAWSPSGSHVVSVDKGCKAVLWAQY).

This sequence belongs to the WD repeat ATG16 family. In terms of assembly, homodimer. Homooligomer. Heterooligomer with ATG16L2. Interacts with WIPI1. Interacts with WIPI2. Interacts with RB1CC1; the interaction is required for ULK1 complex-dependent autophagy. Interacts with ATG5. Part of the minor complex composed of 4 sets of ATG12-ATG5 and ATG16L1 (400 kDa); this complex interacts with ATG3 leading to disruption of ATG7 interaction and promotion of ATG8-like proteins lipidation. Part of the major complex composed of 8 sets of ATG12-ATG5 and ATG16L1 (800 kDa). Interacts with RAB33B (GTP- and GDP-bound forms); the complex consists of a tetramer where two RAB33B molecules bind independently one molecule of the ATG16L1 homodimer; the interaction promotes ATG12-ATG5-ATG16L1 complex recruitment to phagophores. Interacts (via WD repeats) with TMEM59; the interaction mediates unconventional autophagic activity of TMEM59. Interacts with TLR2. Interacts (via WD repeats) with MEFV. Interacts with PPP1CA; the interaction dephosphorylates ATG16L1 causing dissociation of ATG12-ATG5-ATG16L1 complex. Interacts (via N-terminal) with CLTC. Interacts with NOD1. Interacts with NOD2. Interacts with TUFM. Interacts with TRIM16. Interacts (via WD repeats) with SPATA33. Interacts with IRGM. Post-translationally, proteolytic cleavage by activated CASP3 leads to degradation and may regulate autophagy upon cellular stress and apoptotic stimuli. Phosphorylation at Ser-139 promotes association with the ATG12-ATG5 conjugate to form the ATG12-ATG5-ATG16L1 complex.

The protein localises to the cytoplasm. Its subcellular location is the preautophagosomal structure membrane. It localises to the endosome membrane. It is found in the lysosome membrane. Its function is as follows. Plays an essential role in both canonical and non-canonical autophagy: interacts with ATG12-ATG5 to mediate the lipidation to ATG8 family proteins (MAP1LC3A, MAP1LC3B, MAP1LC3C, GABARAPL1, GABARAPL2 and GABARAP). Acts as a molecular hub, coordinating autophagy pathways via distinct domains that support either canonical or non-canonical signaling. During canonical autophagy, interacts with ATG12-ATG5 to mediate the conjugation of phosphatidylethanolamine (PE) to ATG8 proteins, to produce a membrane-bound activated form of ATG8. Thereby, controls the elongation of the nascent autophagosomal membrane. As part of the ATG8 conjugation system with ATG5 and ATG12, required for recruitment of LRRK2 to stressed lysosomes and induction of LRRK2 kinase activity in response to lysosomal stress. Also involved in non-canonical autophagy, a parallel pathway involving conjugation of ATG8 proteins to single membranes at endolysosomal compartments, probably by catalyzing conjugation of phosphatidylserine (PS) to ATG8. Non-canonical autophagy plays a key role in epithelial cells to limit lethal infection by influenza A (IAV) virus. Regulates mitochondrial antiviral signaling (MAVS)-dependent type I interferon (IFN-I) production. Negatively regulates NOD1- and NOD2-driven inflammatory cytokine response. Instead, promotes an autophagy-dependent antibacterial pathway together with NOD1 or NOD2. Plays a role in regulating morphology and function of Paneth cell. The protein is Autophagy-related protein 16-1 of Homo sapiens (Human).